A 189-amino-acid polypeptide reads, in one-letter code: Thymidine kinase (189 aa).

ATP is bound by residues 9–16 and 85–88; these read GTMNSGKT and DESQ. The active-site Proton acceptor is Glu86. Cys143, Cys146, Cys180, and His183 together coordinate Zn(2+).

Belongs to the thymidine kinase family. Homotetramer.

The protein localises to the cytoplasm. It carries out the reaction thymidine + ATP = dTMP + ADP + H(+). The sequence is that of Thymidine kinase from Streptococcus pyogenes serotype M6 (strain ATCC BAA-946 / MGAS10394).